The primary structure comprises 900 residues: Translation initiation factor IF-2 (900 aa).

Residues 48–310 (HLNRDRGNAP…KPSSLQQSFN (263 aa)) are disordered. The span at 68–82 (STLNVPSTGGKSKSV) shows a compositional bias: polar residues. Basic and acidic residues-rich tracts occupy residues 85–98 (EVRK…RDPI) and 108–164 (QARR…KEKV). The span at 165-176 (TNQQNENMTKPA) shows a compositional bias: polar residues. Basic and acidic residues predominate over residues 177-237 (QSEKAKREAE…SATKPEESAD (61 aa)). The span at 263 to 277 (TRTRAAKVTKQKKGN) shows a compositional bias: basic residues. A compositionally biased stretch (basic and acidic residues) spans 278-291 (RQSESKADREEARA). The tr-type G domain maps to 399–568 (FRAPVVTIMG…LLQAEVLELK (170 aa)). Residues 408-415 (GHVDHGKT) form a G1 region. 408 to 415 (GHVDHGKT) lines the GTP pocket. The segment at 433-437 (GITQH) is G2. The tract at residues 454–457 (DTPG) is G3. GTP-binding positions include 454-458 (DTPGH) and 508-511 (NKID). The segment at 508-511 (NKID) is G4. Positions 544–546 (SAK) are G5.

Belongs to the TRAFAC class translation factor GTPase superfamily. Classic translation factor GTPase family. IF-2 subfamily.

It is found in the cytoplasm. In terms of biological role, one of the essential components for the initiation of protein synthesis. Protects formylmethionyl-tRNA from spontaneous hydrolysis and promotes its binding to the 30S ribosomal subunits. Also involved in the hydrolysis of GTP during the formation of the 70S ribosomal complex. The chain is Translation initiation factor IF-2 from Pectobacterium atrosepticum (strain SCRI 1043 / ATCC BAA-672) (Erwinia carotovora subsp. atroseptica).